The primary structure comprises 134 residues: Interleukin-5 (134 aa).

The first 19 residues, 1 to 19, serve as a signal peptide directing secretion; sequence MRMLLHLSLLALGAAYVSA. N-linked (GlcNAc...) asparagine glycosylation is found at N76 and N90.

This sequence belongs to the IL-5 family. As to quaternary structure, homodimer; disulfide-linked. Interacts with IL5RA. Interacts with CSF2RB.

The protein localises to the secreted. Functionally, homodimeric cytokine expressed predominantly by T-lymphocytes and NK cells that plays an important role in the survival, differentiation, and chemotaxis of eosinophils. Also acts on activated and resting B-cells to induce immunoglobulin production, growth, and differentiation. Mechanistically, exerts its biological effects through a receptor composed of IL5RA subunit and the cytokine receptor common subunit beta/CSF2RB. Binding to the receptor leads to activation of various kinases including LYN, SYK and JAK2 and thereby propagates signals through the RAS-MAPK and JAK-STAT5 pathways respectively. The sequence is that of Interleukin-5 (IL5) from Felis catus (Cat).